The following is a 246-amino-acid chain: 23S rRNA (guanosine-2'-O-)-methyltransferase RlmB (246 aa).

3 residues coordinate S-adenosyl-L-methionine: G197, I217, and L226.

It belongs to the class IV-like SAM-binding methyltransferase superfamily. RNA methyltransferase TrmH family. RlmB subfamily.

It is found in the cytoplasm. It carries out the reaction guanosine(2251) in 23S rRNA + S-adenosyl-L-methionine = 2'-O-methylguanosine(2251) in 23S rRNA + S-adenosyl-L-homocysteine + H(+). Its function is as follows. Specifically methylates the ribose of guanosine 2251 in 23S rRNA. This is 23S rRNA (guanosine-2'-O-)-methyltransferase RlmB from Haemophilus influenzae (strain ATCC 51907 / DSM 11121 / KW20 / Rd).